A 447-amino-acid chain; its full sequence is N-succinylarginine dihydrolase (447 aa).

Residues 19-28, Asn-110, and 137-138 each bind substrate; these read AGLSFGNEAS and HR. Residue Glu-174 is part of the active site. Arg-212 is a binding site for substrate. Residue His-248 is part of the active site. Substrate-binding residues include Asp-250 and Asn-359. Catalysis depends on Cys-365, which acts as the Nucleophile.

This sequence belongs to the succinylarginine dihydrolase family. In terms of assembly, homodimer.

The enzyme catalyses N(2)-succinyl-L-arginine + 2 H2O + 2 H(+) = N(2)-succinyl-L-ornithine + 2 NH4(+) + CO2. It functions in the pathway amino-acid degradation; L-arginine degradation via AST pathway; L-glutamate and succinate from L-arginine: step 2/5. Its function is as follows. Catalyzes the hydrolysis of N(2)-succinylarginine into N(2)-succinylornithine, ammonia and CO(2). This is N-succinylarginine dihydrolase from Escherichia coli (strain K12 / MC4100 / BW2952).